The sequence spans 119 residues: Ribonuclease P protein component (119 aa).

Belongs to the RnpA family. Consists of a catalytic RNA component (M1 or rnpB) and a protein subunit.

The catalysed reaction is Endonucleolytic cleavage of RNA, removing 5'-extranucleotides from tRNA precursor.. RNaseP catalyzes the removal of the 5'-leader sequence from pre-tRNA to produce the mature 5'-terminus. It can also cleave other RNA substrates such as 4.5S RNA. The protein component plays an auxiliary but essential role in vivo by binding to the 5'-leader sequence and broadening the substrate specificity of the ribozyme. The chain is Ribonuclease P protein component from Corynebacterium diphtheriae (strain ATCC 700971 / NCTC 13129 / Biotype gravis).